The sequence spans 86 residues: Synergistic-like venom protein (86 aa).

The signal sequence occupies residues 1 to 21 (MKTLLLTLVVVTIVCLDLGYT). 4 cysteine pairs are disulfide-bonded: cysteine 24–cysteine 45, cysteine 38–cysteine 63, cysteine 67–cysteine 78, and cysteine 79–cysteine 84.

It belongs to the three-finger toxin family. Short-chain subfamily. Aminergic toxin sub-subfamily. Expressed by the venom gland.

The protein localises to the secreted. The chain is Synergistic-like venom protein from Dendroaspis angusticeps (Eastern green mamba).